The following is a 416-amino-acid chain: Ribulose bisphosphate carboxylase large chain (416 aa).

An N6,N6,N6-trimethyllysine modification is found at Lys5. Substrate contacts are provided by Asn114 and Thr164. The Proton acceptor role is filled by Lys166. Lys168 is a substrate binding site. Mg(2+)-binding residues include Lys192, Asp194, and Glu195. N6-carboxylysine is present on Lys192. The active-site Proton acceptor is the His285. 3 residues coordinate substrate: Arg286, His318, and Ser370.

It belongs to the RuBisCO large chain family. Type I subfamily. As to quaternary structure, heterohexadecamer of 8 large chains and 8 small chains; disulfide-linked. The disulfide link is formed within the large subunit homodimers. The cofactor is Mg(2+). In terms of processing, the disulfide bond which can form in the large chain dimeric partners within the hexadecamer appears to be associated with oxidative stress and protein turnover.

It is found in the plastid. The protein resides in the chloroplast. It carries out the reaction 2 (2R)-3-phosphoglycerate + 2 H(+) = D-ribulose 1,5-bisphosphate + CO2 + H2O. The catalysed reaction is D-ribulose 1,5-bisphosphate + O2 = 2-phosphoglycolate + (2R)-3-phosphoglycerate + 2 H(+). Functionally, ruBisCO catalyzes two reactions: the carboxylation of D-ribulose 1,5-bisphosphate, the primary event in carbon dioxide fixation, as well as the oxidative fragmentation of the pentose substrate in the photorespiration process. Both reactions occur simultaneously and in competition at the same active site. The sequence is that of Ribulose bisphosphate carboxylase large chain (rbcL) from Spigelia marilandica (Woodland pinkroot).